A 122-amino-acid chain; its full sequence is Acidic phospholipase A2 1 (122 aa).

Cystine bridges form between cysteine 26–cysteine 115, cysteine 28–cysteine 44, cysteine 43–cysteine 94, cysteine 49–cysteine 122, cysteine 50–cysteine 87, cysteine 57–cysteine 81, and cysteine 75–cysteine 85. Residues tyrosine 27, glycine 29, and glycine 31 each contribute to the Ca(2+) site. The active site involves histidine 47. Residue aspartate 48 participates in Ca(2+) binding. Residue aspartate 88 is part of the active site.

The protein belongs to the phospholipase A2 family. Group II subfamily. D49 sub-subfamily. Homodimer. It depends on Ca(2+) as a cofactor. In terms of tissue distribution, expressed by the venom gland.

It is found in the secreted. The catalysed reaction is a 1,2-diacyl-sn-glycero-3-phosphocholine + H2O = a 1-acyl-sn-glycero-3-phosphocholine + a fatty acid + H(+). In terms of biological role, PLA2 catalyzes the calcium-dependent hydrolysis of the 2-acyl groups in 3-sn-phosphoglycerides. In Protobothrops mucrosquamatus (Taiwan habu), this protein is Acidic phospholipase A2 1.